We begin with the raw amino-acid sequence, 501 residues long: Glucose-6-phosphate exchanger SLC37A2 (501 aa).

The chain crosses the membrane as a helical span at residues 19-39 (SWFRGFILLLTFLIYACYHMS). 3 N-linked (GlcNAc...) asparagine glycosylation sites follow: Asn-53, Asn-62, and Asn-68. The next 5 membrane-spanning stretches (helical) occupy residues 88-108 (GAVD…SGIF), 118-140 (LSAG…FWNI), 142-164 (MLWY…WPSV), 179-199 (FIMG…SLIA), and 210-230 (SFIV…LFLI). Positions 240–252 (PPRHHDDPEKEQD) are enriched in basic and acidic residues. Residues 240–266 (PPRHHDDPEKEQDNPEDPVNSPYSSRE) are disordered. The next 6 helical transmembrane spans lie at 303–323 (CLLF…LYIF), 334–354 (GDLS…AGLI), 362–382 (ATTC…YNYI), 391–411 (IVML…ITTA), 434–454 (AIID…AGLI), and 462–482 (VFYM…RLVY).

The protein belongs to the major facilitator superfamily. Organophosphate:Pi antiporter (OPA) (TC 2.A.1.4) family. In terms of tissue distribution, highly expressed in bone marrow derived macrophages, and weakly in spleen.

The protein resides in the endoplasmic reticulum membrane. It carries out the reaction D-glucose 6-phosphate(in) + phosphate(out) = D-glucose 6-phosphate(out) + phosphate(in). Its activity is regulated as follows. Inhibited by vanadate but not by chlorogenic acid. Its function is as follows. Inorganic phosphate and glucose-6-phosphate antiporter. May transport cytoplasmic glucose-6-phosphate into the lumen of the endoplasmic reticulum and translocate inorganic phosphate into the opposite direction. Independent of a lumenal glucose-6-phosphatase. May not play a role in homeostatic regulation of blood glucose levels. The chain is Glucose-6-phosphate exchanger SLC37A2 from Mus musculus (Mouse).